Here is a 225-residue protein sequence, read N- to C-terminus: C-reactive protein (225 aa).

The first 18 residues, 1 to 18, serve as a signal peptide directing secretion; the sequence is MLVVFLCLLSVTLEATEG. The region spanning 23–225 is the Pentraxin (PTX) domain; it reads SGKVLQFKTA…TGNVLVATDN (203 aa). Cys54 and Cys116 are oxidised to a cystine. Residues Asp78, Asp157, Pro158, Asp159, and Gln169 each contribute to the Ca(2+) site.

The protein belongs to the pentraxin family. In terms of assembly, homotrimer. Requires Ca(2+) as cofactor.

The protein resides in the secreted. Its function is as follows. Displays several functions associated with host defense: it promotes agglutination, bacterial capsular swelling, phagocytosis, and complement fixation through its calcium-dependent binding to phosphorylcholine. This is C-reactive protein from Danio rerio (Zebrafish).